We begin with the raw amino-acid sequence, 309 residues long: L-aminoadipate-semialdehyde dehydrogenase-phosphopantetheinyl transferase (309 aa).

CoA contacts are provided by residues Arg-47, 86-91 (RTSKGK), and 108-111 (NISH). Mg(2+) contacts are provided by Asp-129 and Glu-181. 181–185 (ESFIK) contributes to the CoA binding site.

This sequence belongs to the P-Pant transferase superfamily. AcpS family. Monomer. It depends on Mg(2+) as a cofactor.

It is found in the cytoplasm. Its subcellular location is the cytosol. It catalyses the reaction apo-[ACP] + CoA = holo-[ACP] + adenosine 3',5'-bisphosphate + H(+). It carries out the reaction apo-[ACP] + acetyl-CoA = acetyl-[ACP] + adenosine 3',5'-bisphosphate + H(+). Its function is as follows. Catalyzes the post-translational modification of target proteins by phosphopantetheine. Can transfer the 4'-phosphopantetheine moiety from coenzyme A, regardless of whether the CoA is presented in the free thiol form or as an acetyl thioester, to a serine residue of a broad range of acceptors including the acyl carrier domain of FASN. In Mus musculus (Mouse), this protein is L-aminoadipate-semialdehyde dehydrogenase-phosphopantetheinyl transferase (Aasdhppt).